Reading from the N-terminus, the 450-residue chain is MNNKRHSTNEQLSLDEINNTIKFDHRSSNKQKFLSFLGPGLLVAVGYMDPGNWITSMQGGAQYGYTLLFVILISSLSAMLLQSMTVRLGIATGMDLAQMTRHYLSRPIAIIFWIIAELAIIATDIAEVIGSAIALNLLFNIPLIVGALITVLDVFLLLFIMKYGFRKIEAIVGTFIFTVLFIFIFEVYISSPQLNAVLNGFIPHSEIITNNGILYIALGIIGATIMPHNLYLHSSIVQSRTYSRHNNEEKAQAIKFATIDSNIQLSIAFVVNCLLLVLGASLFFNSNADDLGGFYDLYHALKTEPVLGATMGAIMSTLFAVALLASGQNSTITGTLAGQIVMEGFLRLHIPNWLRRLITRSLAVIPVIVCLIIFKGNAAKIEQLLVFSQVFLSIALPFCLIPLQLATSNKDLMGPFYNKTWVNIISWTLIIILSILNVYLIVQTFQELQS.

11 consecutive transmembrane segments (helical) span residues 34–54 (LSFL…GNWI), 61–81 (AQYG…AMLL), 108–128 (IAII…IAEV), 141–161 (IPLI…LFIM), 170–190 (AIVG…VYIS), 212–232 (GILY…NLYL), 263–283 (IQLS…ASLF), 305–325 (PVLG…ALLA), 361–381 (SLAV…AAKI), 383–403 (QLLV…LIPL), and 422–442 (VNII…YLIV).

This sequence belongs to the NRAMP family.

It is found in the cell membrane. Its function is as follows. H(+)-stimulated, divalent metal cation uptake system. This is Divalent metal cation transporter MntH from Staphylococcus aureus (strain Mu3 / ATCC 700698).